We begin with the raw amino-acid sequence, 185 residues long: Large ribosomal subunit protein uL5 (185 aa).

Belongs to the universal ribosomal protein uL5 family. In terms of assembly, part of the 50S ribosomal subunit; part of the 5S rRNA/L5/L18/L25 subcomplex. Contacts the 5S rRNA and the P site tRNA. Forms a bridge to the 30S subunit in the 70S ribosome.

In terms of biological role, this is one of the proteins that bind and probably mediate the attachment of the 5S RNA into the large ribosomal subunit, where it forms part of the central protuberance. In the 70S ribosome it contacts protein S13 of the 30S subunit (bridge B1b), connecting the 2 subunits; this bridge is implicated in subunit movement. Contacts the P site tRNA; the 5S rRNA and some of its associated proteins might help stabilize positioning of ribosome-bound tRNAs. The protein is Large ribosomal subunit protein uL5 of Parvibaculum lavamentivorans (strain DS-1 / DSM 13023 / NCIMB 13966).